A 271-amino-acid polypeptide reads, in one-letter code: Replication-associated protein A (271 aa).

The CRESS-DNA virus Rep endonuclease domain maps to 11 to 114 (LHRNANTFLT…PLAVFERGTF (104 aa)). The RCR-1 motif lies at 18–21 (FLTY). A divalent metal cation contacts are provided by Glu52, His60, and His62. Residues 60 to 62 (HLH) carry the RCR-2 motif. Tyr100 functions as the For DNA cleavage activity in the catalytic mechanism. Residues 100–103 (YILK) carry the RCR-3 motif. Glu104 lines the a divalent metal cation pocket. Residues 174-186 (SANKLFPDIQEEF) form an oligomerization region. The interval 197-201 (LLCNE) is binding to RBR1. The transactivation stretch occupies residues 220–229 (MLLQPTCYTV). Positions 244-264 (SQQMKDQESRASTSSVQQGQG) are enriched in polar residues. The interval 244–271 (SQQMKDQESRASTSSVQQGQGNLLGPEV) is disordered.

It belongs to the geminiviridae Rep protein family. Homooligomer. Interacts with host retinoblastoma-related protein 1 (RBR1), and may thereby deregulate the host cell cycle. Part of the C- and V-complexes which are RepA-Rep-DNA complexes involved in the c-sense and v-sense transcription. The cofactor is Mg(2+). It depends on Mn(2+) as a cofactor.

The protein resides in the host nucleus. The protein localises to the host cytoplasm. In terms of biological role, implicated in enhancement of V-sense gene expression. Acts a an inhibitor of C-sense gene transcription. The chain is Replication-associated protein A from Avena sativa (Oat).